We begin with the raw amino-acid sequence, 497 residues long: MTKHIIVIGGGLGGISAAIRMAQSGYSVSLYEQNNHIGGKVNRHESDGFGFDLGPSILTMPYIFEKLFEYSKKQMSDYVTIKRLPHQWRSFFPDGTTIDLYEGIKETGQHNAILSKQDIEELQNYLNYTRRIDRITEKGYFNYGLDTLSQIIKFHGPLNALINYDYVHTMQQAIDKRISNPYLRQMLGYFIKYVGSSSYDAPAVLSMLFHMQQEQGLWYVEGGIHHLANALEKLAREEGVTIHTGARVDNIKTYQRRVTGVRLDTGEFVKADYIISNMEVIPTYKYLIHLDTQRLNKLEREFEPASSGYVMHLGVACQYPQLAHHNFFFTENAYLNYQQVFHEKVLPDDPTIYLVNTNKTDHTQAPVGYENIKVLPHIPYIQDQPFTTEDYAKFRDKILDKLEKMGLTDLRKHIIYEDVWTPEDIEKNYRSNRGAIYGVVADKKKNKGFKFPKESQYFENLYFVGGSVNPGGGMPMVTLSGQQVADKINAREAKNRK.

7–19 (VIGGGLGGISAAI) contributes to the FAD binding site.

Belongs to the carotenoid/retinoid oxidoreductase family. CrtP subfamily. Requires FAD as cofactor.

It catalyses the reaction all-trans-4,4'-diaponeurosporene + 2 AH2 + 2 O2 = 4,4'-diaponeurosporenal + 2 A + 3 H2O. The protein operates within carotenoid biosynthesis; staphyloxanthin biosynthesis; staphyloxanthin from farnesyl diphosphate: step 3/5. In terms of biological role, involved in the biosynthesis of the yellow-orange carotenoid staphyloxanthin, which plays a role in the virulence via its protective function against oxidative stress. Catalyzes the oxidation of the terminal methyl side group of 4,4'-diaponeurosporene to form 4,4'-diaponeurosporen-4-al. The protein is 4,4'-diaponeurosporene oxygenase of Staphylococcus aureus (strain USA300).